Consider the following 988-residue polypeptide: Ubiquitin carboxyl-terminal hydrolase 36 (988 aa).

Residues 16–55 (PTLRTDNNGARKQAEHPNNQSHHNHPHPTSNPNELPKPKR) form a disordered region. Low complexity predominate over residues 31–48 (HPNNQSHHNHPHPTSNPN). The region spanning 78 to 386 (TGMINVGNTC…NAYIMFFELD (309 aa)) is the USP domain. The active-site Nucleophile is C87. Catalysis depends on H345, which acts as the Proton acceptor. 3 disordered regions span residues 393–422 (PPAN…SPSP), 483–782 (ATSA…VTSN), and 868–988 (EQRQ…QQQT). 2 stretches are compositionally biased toward low complexity: residues 408–422 (STTP…SPSP) and 490–509 (NGNK…KSIN). Residues S419 and S421 each carry the phosphoserine modification. Residues 532–544 (TTAQLPSMPNMTE) are compositionally biased toward polar residues. T561 and T565 each carry phosphothreonine. Phosphoserine is present on residues S575 and S577. Residues 592–601 (EGEDFSESDQ) show a composition bias toward acidic residues. Over residues 602–631 (ESGQTNGHSKTNGSLTNGSASSSVHVNNSK) the composition is skewed to polar residues. Over residues 632-649 (QKTDAIDEIFKSLKKSAD) the composition is skewed to basic and acidic residues. S650 is modified (phosphoserine). Over residues 650 to 659 (SEEDDDEEEP) the composition is skewed to acidic residues. The segment covering 669–679 (PQKQSQSQSKA) has biased composition (low complexity). Residues 680–689 (PPSPKTPPSP) show a composition bias toward pro residues. S682 bears the Phosphoserine mark. T685 carries the phosphothreonine modification. A Phosphoserine modification is found at S688. The span at 707 to 717 (VDAIDDDDDAV) shows a compositional bias: acidic residues. T728 carries the phosphothreonine modification. A compositionally biased stretch (polar residues) spans 735–747 (NPFSSSKPSTDSP). Phosphoserine is present on S746. T749 bears the Phosphothreonine mark. Residues 762-782 (ALKSHQQPRVGNGYQSNVTSN) show a composition bias toward polar residues. 2 stretches are compositionally biased toward low complexity: residues 892–903 (SGSAKGNNASNS) and 930–943 (RFHN…FQQR).

This sequence belongs to the peptidase C19 family. Interacts with atms/PAF1, but not with CycT.

Its subcellular location is the nucleus. The protein resides in the nucleolus. It catalyses the reaction Thiol-dependent hydrolysis of ester, thioester, amide, peptide and isopeptide bonds formed by the C-terminal Gly of ubiquitin (a 76-residue protein attached to proteins as an intracellular targeting signal).. Required for maintaining multiple types of adult stem cells, including male and female germline, epithelial follicle cell and intestinal stem cells. May function as a transcriptional repressor by continually deubiquiting histone H2B at the promoters of genes critical for cellular differentiation, thereby preventing histone H3 'Lys-4' trimethylation (H3K4). Controls selective autophagy activation by ubiquitinated proteins. This chain is Ubiquitin carboxyl-terminal hydrolase 36 (Usp36), found in Drosophila simulans (Fruit fly).